Reading from the N-terminus, the 107-residue chain is Putative septation protein SpoVG (107 aa).

The tract at residues Glu82–Ala107 is disordered. A compositionally biased stretch (acidic residues) spans Asp97–Ala107.

The protein belongs to the SpoVG family.

Functionally, could be involved in septation. The sequence is that of Putative septation protein SpoVG from Staphylococcus carnosus (strain TM300).